The sequence spans 58 residues: ATP synthase F(0) complex subunit k, mitochondrial (58 aa).

N6-acetyllysine is present on residues lysine 16 and lysine 17. A helical transmembrane segment spans residues 23 to 45; sequence TLTGRMNCVLATYGGIALLVLYF.

As to quaternary structure, component of the ATP synthase complex composed at least of ATP5F1A/subunit alpha, ATP5F1B/subunit beta, ATP5MC1/subunit c (homooctomer), MT-ATP6/subunit a, MT-ATP8/subunit 8, ATP5ME/subunit e, ATP5MF/subunit f, ATP5MG/subunit g, ATP5MK/subunit k, ATP5MJ/subunit j, ATP5F1C/subunit gamma, ATP5F1D/subunit delta, ATP5F1E/subunit epsilon, ATP5PF/subunit F6, ATP5PB/subunit b, ATP5PD/subunit d, ATP5PO/subunit OSCP. ATP synthase complex consists of a soluble F(1) head domain (subunits alpha(3) and beta(3)) - the catalytic core - and a membrane F(0) domain - the membrane proton channel (subunits c, a, 8, e, f, g, k and j). These two domains are linked by a central stalk (subunits gamma, delta, and epsilon) rotating inside the F1 region and a stationary peripheral stalk (subunits F6, b, d, and OSCP). The ATP synthase complex/complex V exists as a monomeric and a dimeric supercomplex that helps shape mitochondrial cristae to optimize proton flow. As to expression, ubiquitous. Highly expressed in skeletal and cardiac muscle. Moderately expressed in brain, thymus, stomach and testis. Lowest expression levels were detected in lung, liver, kidney, adrenal gland, spleen, small intestine and adipose tissue. In streptozotocin-induced diabetes, the insulin-sensitive tissues skeletal and cardiac muscle were down-regulated.

It localises to the mitochondrion membrane. Its function is as follows. Subunit k, of the mitochondrial membrane ATP synthase complex (F(1)F(0) ATP synthase or Complex V) that produces ATP from ADP in the presence of a proton gradient across the membrane which is generated by electron transport complexes of the respiratory chain. ATP synthase complex consist of a soluble F(1) head domain - the catalytic core - and a membrane F(1) domain - the membrane proton channel. These two domains are linked by a central stalk rotating inside the F(1) region and a stationary peripheral stalk. During catalysis, ATP synthesis in the catalytic domain of F(1) is coupled via a rotary mechanism of the central stalk subunits to proton translocation. In vivo, can only synthesize ATP although its ATP hydrolase activity can be activated artificially in vitro. Part of the complex F(0) domain. Required for dimerization of the ATP synthase complex and as such regulates ATP synthesis in the mitochondria. The polypeptide is ATP synthase F(0) complex subunit k, mitochondrial (Atp5mk) (Rattus norvegicus (Rat)).